We begin with the raw amino-acid sequence, 479 residues long: Protoheme IX farnesyltransferase (479 aa).

Residues 1–207 (MAEQTATTTS…AYIRLTKPRL (207 aa)) form a unknown region. A run of 4 helical transmembrane segments spans residues 20-40 (LLAG…TTAV), 64-84 (IGWL…CAVV), 98-118 (VLIT…VGAV), and 128-148 (LSVI…IALA). Over residues 155-164 (TGDPTETQTT) the composition is skewed to low complexity. A disordered region spans residues 155–186 (TGDPTETQTTPSKPEPDQDLPPASEYDPDLPA). Transmembrane regions (helical) follow at residues 207–227 (LMWL…TTTG), 231–251 (PGIA…SGTF), 271–291 (LATD…LTVI), 303–322 (AAIL…TLLL), 324–344 (PNTV…ALIG), 345–365 (WVAV…VIFL), 402–422 (HVIW…TIEA), 423–443 (LGIV…YFAI), and 459–479 (HASN…TLVI). Positions 208–476 (MWLLCLVASA…AVLIAIVFDT (269 aa)) are protoheme IX prenyltransferase.

The protein in the C-terminal section; belongs to the UbiA prenyltransferase family. Protoheme IX farnesyltransferase subfamily.

Its subcellular location is the cell membrane. It carries out the reaction heme b + (2E,6E)-farnesyl diphosphate + H2O = Fe(II)-heme o + diphosphate. The protein operates within porphyrin-containing compound metabolism; heme O biosynthesis; heme O from protoheme: step 1/1. Functionally, converts heme B (protoheme IX) to heme O by substitution of the vinyl group on carbon 2 of heme B porphyrin ring with a hydroxyethyl farnesyl side group. The sequence is that of Protoheme IX farnesyltransferase (ctaB) from Haloquadratum walsbyi (strain DSM 16790 / HBSQ001).